Here is a 130-residue protein sequence, read N- to C-terminus: MSQQLSSQTPSNQDRIVGKHVFGNLYDIDDKLLMDKDLLEGLVLEAVKIAKMNLVEIKSWSFGGKKGGVSVIALVEESHIALHTWNEYKYATLDVYTCGVDSNPQAAFEFIVSNLKPKRHQMFFADRSSE.

The active-site Schiff-base intermediate with substrate; via pyruvic acid is the Ser78. Ser78 carries the post-translational modification Pyruvic acid (Ser); by autocatalysis. The active-site Proton acceptor; for processing activity is the His83. Cys98 acts as the Proton donor; for catalytic activity in catalysis.

This sequence belongs to the prokaryotic AdoMetDC family. Type 1 subfamily. Heterooctamer of four alpha and four beta chains arranged as a tetramer of alpha/beta heterodimers. It depends on pyruvate as a cofactor. In terms of processing, is synthesized initially as an inactive proenzyme. Formation of the active enzyme involves a self-maturation process in which the active site pyruvoyl group is generated from an internal serine residue via an autocatalytic post-translational modification. Two non-identical subunits are generated from the proenzyme in this reaction, and the pyruvate is formed at the N-terminus of the alpha chain, which is derived from the carboxyl end of the proenzyme. The post-translation cleavage follows an unusual pathway, termed non-hydrolytic serinolysis, in which the side chain hydroxyl group of the serine supplies its oxygen atom to form the C-terminus of the beta chain, while the remainder of the serine residue undergoes an oxidative deamination to produce ammonia and the pyruvoyl group blocking the N-terminus of the alpha chain.

It catalyses the reaction L-arginine + H(+) = agmatine + CO2. It participates in amine and polyamine biosynthesis; agmatine biosynthesis; agmatine from L-arginine: step 1/1. Functionally, specifically catalyzes the decarboxylation of L-arginine to agmatine. Has no S-adenosylmethionine decarboxylase (AdoMetDC) activity. This is Arginine decarboxylase proenzyme from Sulfolobus acidocaldarius (strain ATCC 33909 / DSM 639 / JCM 8929 / NBRC 15157 / NCIMB 11770).